A 155-amino-acid chain; its full sequence is Putative pre-16S rRNA nuclease (155 aa).

The disordered stretch occupies residues 136 to 155 (DAERATSRPPGHPVEPRIGP).

It belongs to the YqgF nuclease family.

Its subcellular location is the cytoplasm. Functionally, could be a nuclease involved in processing of the 5'-end of pre-16S rRNA. The protein is Putative pre-16S rRNA nuclease of Leifsonia xyli subsp. xyli (strain CTCB07).